The sequence spans 389 residues: MVTVEEYRKAQRAEGPATVMAIGTATPTNCVDQSTYPDYYFRITNSEHKTDLKEKFKRMCEKSMIKKRYMHLTEEILKENPSMCEYMAPSLDARQDIVVVEVPKLGKEAAQKAIKEWGQPKSKITHLVFCTTSGVDMPGCDYQLTKLLGLRPSVKRLMMYQQGCFAGGTVLRLAKDLAENNKGARVLVVCSEITAVTFRGPNDTHLDSLVGQALFGDGAGAIIIGSDPIPGVERPLFELVSAAQTLLPDSHGAIDGHLREVGLTFHLLKDVPGLISKNIEKSLEEAFKPLGISDWNSLFWIAHPGGPAILDQVEIKLGLKPEKLKATRNVLSDYGNMSSACVLFILDEMRKASAKEGLGTTGEGLEWGVLFGFGPGLTVETVVLHSVAT.

The active site involves Cys-164.

It belongs to the thiolase-like superfamily. Chalcone/stilbene synthases family. Major expressed member of the gene family in various floral tissues and in seedlings treated with UV light. It is relatively low expressed in tissue culture material.

It catalyses the reaction (E)-4-coumaroyl-CoA + 3 malonyl-CoA + 3 H(+) = 2',4,4',6'-tetrahydroxychalcone + 3 CO2 + 4 CoA. Its pathway is secondary metabolite biosynthesis; flavonoid biosynthesis. Functionally, the primary product of this enzyme is 4,2',4',6'-tetrahydroxychalcone (also termed naringenin-chalcone or chalcone) which can under specific conditions spontaneously isomerize into naringenin. In Petunia hybrida (Petunia), this protein is Chalcone synthase A (CHSA).